Here is a 313-residue protein sequence, read N- to C-terminus: 4-diphosphocytidyl-2-C-methyl-D-erythritol kinase (313 aa).

The active site involves K10. Residue 95–105 (PVTAGLGGGSS) coordinates ATP. The active site involves D136. Residues 289-313 (HPRVSPWRSPRSASSRSTRRSSRPT) form a disordered region. Residues 292–304 (VSPWRSPRSASSR) show a composition bias toward low complexity.

It belongs to the GHMP kinase family. IspE subfamily.

It catalyses the reaction 4-CDP-2-C-methyl-D-erythritol + ATP = 4-CDP-2-C-methyl-D-erythritol 2-phosphate + ADP + H(+). The protein operates within isoprenoid biosynthesis; isopentenyl diphosphate biosynthesis via DXP pathway; isopentenyl diphosphate from 1-deoxy-D-xylulose 5-phosphate: step 3/6. Catalyzes the phosphorylation of the position 2 hydroxy group of 4-diphosphocytidyl-2C-methyl-D-erythritol. In Anaeromyxobacter sp. (strain K), this protein is 4-diphosphocytidyl-2-C-methyl-D-erythritol kinase.